The primary structure comprises 161 residues: Phosphopantetheine adenylyltransferase (161 aa).

Serine 9 serves as a coordination point for substrate. ATP contacts are provided by residues 9–10 (SF) and histidine 17. Substrate is bound by residues lysine 41, threonine 73, and arginine 87. ATP contacts are provided by residues 88 to 90 (GIR), glutamate 98, and 123 to 129 (YQYVSSS).

Belongs to the bacterial CoaD family. Homohexamer. The cofactor is Mg(2+).

Its subcellular location is the cytoplasm. It catalyses the reaction (R)-4'-phosphopantetheine + ATP + H(+) = 3'-dephospho-CoA + diphosphate. The protein operates within cofactor biosynthesis; coenzyme A biosynthesis; CoA from (R)-pantothenate: step 4/5. Reversibly transfers an adenylyl group from ATP to 4'-phosphopantetheine, yielding dephospho-CoA (dPCoA) and pyrophosphate. The sequence is that of Phosphopantetheine adenylyltransferase from Levilactobacillus brevis (strain ATCC 367 / BCRC 12310 / CIP 105137 / JCM 1170 / LMG 11437 / NCIMB 947 / NCTC 947) (Lactobacillus brevis).